The sequence spans 369 residues: 4-hydroxy-3-methylbut-2-en-1-yl diphosphate synthase (flavodoxin) (369 aa).

[4Fe-4S] cluster contacts are provided by C270, C273, C305, and E312.

It belongs to the IspG family. Requires [4Fe-4S] cluster as cofactor.

It carries out the reaction (2E)-4-hydroxy-3-methylbut-2-enyl diphosphate + oxidized [flavodoxin] + H2O + 2 H(+) = 2-C-methyl-D-erythritol 2,4-cyclic diphosphate + reduced [flavodoxin]. It participates in isoprenoid biosynthesis; isopentenyl diphosphate biosynthesis via DXP pathway; isopentenyl diphosphate from 1-deoxy-D-xylulose 5-phosphate: step 5/6. In terms of biological role, converts 2C-methyl-D-erythritol 2,4-cyclodiphosphate (ME-2,4cPP) into 1-hydroxy-2-methyl-2-(E)-butenyl 4-diphosphate. This is 4-hydroxy-3-methylbut-2-en-1-yl diphosphate synthase (flavodoxin) from Pseudomonas fluorescens (strain Pf0-1).